The following is a 135-amino-acid chain: MSKEFSRAQRVSQQLQKELAVILQREVRDSRIGMVTISDVEVSRDLAYAKVFVTFFCVGEQTPETCLAALKEHEVPVRMMLGKRIRHRLTPEVRFTYDNTLVEGMRMSNLVSDVVNTDKRKMAESGRTESDEGEE.

It belongs to the RbfA family. Monomer. Binds 30S ribosomal subunits, but not 50S ribosomal subunits or 70S ribosomes.

It localises to the cytoplasm. Its function is as follows. One of several proteins that assist in the late maturation steps of the functional core of the 30S ribosomal subunit. Associates with free 30S ribosomal subunits (but not with 30S subunits that are part of 70S ribosomes or polysomes). Required for efficient processing of 16S rRNA. May interact with the 5'-terminal helix region of 16S rRNA. This Aliivibrio salmonicida (strain LFI1238) (Vibrio salmonicida (strain LFI1238)) protein is Ribosome-binding factor A.